The primary structure comprises 271 residues: Thioredoxin-related transmembrane protein 2 homolog (271 aa).

The first 28 residues, 1 to 28 (MTWKKQMALLAKPYYWVNILLAISYLLA), serve as a signal peptide directing secretion. Residues 29–102 (KKTQFICTRL…AILWAYADFR (74 aa)) are Extracellular-facing. Residues 103-123 (YGLGFLLLCVLVGMVLPEPSY) traverse the membrane as a helical segment. The region spanning 112-262 (VLVGMVLPEP…YKEAIERLPI (151 aa)) is the Thioredoxin domain. Residues 124–271 (RGPEHITYFR…IAPKEAKKVQ (148 aa)) lie on the Cytoplasmic side of the membrane. Positions 268 to 271 (KKVQ) match the Di-lysine motif motif.

The protein localises to the membrane. The sequence is that of Thioredoxin-related transmembrane protein 2 homolog from Drosophila melanogaster (Fruit fly).